We begin with the raw amino-acid sequence, 229 residues long: Non-structural protein P8 (229 aa).

2 helical membrane-spanning segments follow: residues Ile119–Leu139 and Ser162–Ala182.

Belongs to the orbivirus NS3 family. As to quaternary structure, forms homooligomers via coiled-coil motif. Interacts with host OPTN; this interaction inhibits innate immune response.

The protein resides in the host cell membrane. It is found in the host Golgi apparatus. In terms of biological role, plays a role in the inhibition of host innate immune response. Interacts with host OPTN and thus inhibits the recruitment of TBK1 to the host Golgi apparatus. In turn, downstream partner IRF3 cannot be activated and IFN-beta production is impaired. Its function is as follows. Facilitates viral particle release either by increasing plasma membrane permeability through a viroporin-like activity or by viral budding. The protein is Non-structural protein P8 (Segment-10) of Antilocapra americana (Pronghorn).